Consider the following 51-residue polypeptide: Small ribosomal subunit protein uS14 (51 aa).

Zn(2+) is bound by residues C16, C19, C34, and C37.

The protein belongs to the universal ribosomal protein uS14 family. Zinc-binding uS14 subfamily. As to quaternary structure, part of the 30S ribosomal subunit. The cofactor is Zn(2+).

Binds 16S rRNA, required for the assembly of 30S particles. This Archaeoglobus fulgidus (strain ATCC 49558 / DSM 4304 / JCM 9628 / NBRC 100126 / VC-16) protein is Small ribosomal subunit protein uS14.